We begin with the raw amino-acid sequence, 210 residues long: MRVHVADHPLITHKLSVLRNKETPAPTFRALTEELVTLLAYEATRAVRVEPVEIETPVTSTRGVTISEPRPLVVPILRAGLGMLEGMVSLMPTAEVGFLGMARNEETFEPTTYAERLPMDLSERQCFVLDPMLATGGSLGAAIDFLFKRNAVDVTAICILAAPEGLAALEKATEGRDVTIVLGALDERLNENGYIVPGLGDAGDRLYGTV.

5-phospho-alpha-D-ribose 1-diphosphate is bound by residues arginine 78, arginine 103, and 130 to 138; that span reads DPMLATGGS. Uracil is bound by residues isoleucine 195 and 200-202; that span reads GDA. Aspartate 201 serves as a coordination point for 5-phospho-alpha-D-ribose 1-diphosphate.

Belongs to the UPRTase family. It depends on Mg(2+) as a cofactor.

It catalyses the reaction UMP + diphosphate = 5-phospho-alpha-D-ribose 1-diphosphate + uracil. It functions in the pathway pyrimidine metabolism; UMP biosynthesis via salvage pathway; UMP from uracil: step 1/1. Allosterically activated by GTP. Catalyzes the conversion of uracil and 5-phospho-alpha-D-ribose 1-diphosphate (PRPP) to UMP and diphosphate. The protein is Uracil phosphoribosyltransferase of Leifsonia xyli subsp. xyli (strain CTCB07).